A 338-amino-acid polypeptide reads, in one-letter code: Nuclear hormone receptor family member nhr-108 (338 aa).

A DNA-binding region (nuclear receptor) is located at residues 7-82 (NQPCMVCGEI…IGMLEKVVAS (76 aa)). Residues 10 to 30 (CMVCGEISYSIRFGAVSCRAC) form an NR C4-type zinc finger. The NR C4-type; degenerate zinc finger occupies 46 to 65 (KRCNGACDLGKYHRKTCQSC). The NR LBD domain maps to 92–338 (NNQTILSGLE…QCPLYEATNE (247 aa)).

The protein belongs to the nuclear hormone receptor family.

It localises to the nucleus. In terms of biological role, orphan nuclear receptor. The sequence is that of Nuclear hormone receptor family member nhr-108 (nhr-108) from Caenorhabditis elegans.